The following is a 771-amino-acid chain: Endoplasmin homolog (771 aa).

An N-terminal signal peptide occupies residues 1 to 24 (MANSSLLRVVLVALLLLGSVTVSA). ATP contacts are provided by Asn-63, Asp-109, and Phe-160. Asn-63 carries N-linked (GlcNAc...) asparagine glycosylation. Residues 253 to 282 (TAATPEPAAEEGSLDEGAVEEDPDKEGDTQ) are disordered. The segment covering 260–277 (AAEEGSLDEGAVEEDPDK) has biased composition (acidic residues). 2 N-linked (GlcNAc...) asparagine glycosylation sites follow: Asn-306 and Asn-402. The interval 727–771 (ADDSLLPPDDAEYTVSDTEAEEEEEQPKVDANADEEAEAVGEDDL) is disordered. Over residues 758–771 (NADEEAEAVGEDDL) the composition is skewed to acidic residues. A Prevents secretion from ER motif is present at residues 768–771 (EDDL).

The protein belongs to the heat shock protein 90 family. Homotetramer.

The protein resides in the endoplasmic reticulum. In terms of biological role, molecular chaperone that functions in the processing and transport of secreted proteins. Required for the synthesis of lipophosphoglycan (LPG), a cell surface glycoconjugate. Necessary for the attachment of the galactosyl residue to the mannose within the phosphoglycan repeats of the nascent LPG chain. Also required for addition of phosphoglycan to acid phosphatase. Not required for normal growth. Has ATPase activity. Binds heparin with micromolar affinity which may facilitate infection of host cells. In Leishmania infantum, this protein is Endoplasmin homolog.